A 453-amino-acid chain; its full sequence is Tol-Pal system protein TolB (453 aa).

The N-terminal stretch at 1–31 (MINNLSVSMTKVLKIILTIIIILFNTLSILA) is a signal peptide.

The protein belongs to the TolB family. In terms of assembly, the Tol-Pal system is composed of five core proteins: the inner membrane proteins TolA, TolQ and TolR, the periplasmic protein TolB and the outer membrane protein Pal. They form a network linking the inner and outer membranes and the peptidoglycan layer.

It is found in the periplasm. Part of the Tol-Pal system, which plays a role in outer membrane invagination during cell division and is important for maintaining outer membrane integrity. This chain is Tol-Pal system protein TolB, found in Orientia tsutsugamushi (strain Boryong) (Rickettsia tsutsugamushi).